The primary structure comprises 346 residues: Glucose-6-phosphatase 3 (346 aa).

Residues 1-25 (MESTLSAGIMMAEALQNQLPGLENM) are Lumenal-facing. A helical membrane pass occupies residues 26-46 (WLWVTFLADPKNLFQFYFPAV). Residues 47–56 (YYASRRLGIS) are Cytoplasmic-facing. Residues 57–77 (LFWIAFITEWLNLVFKWFLFG) form a helical membrane-spanning segment. At 78 to 115 (DRPFWWVHESGYSAQTPVQIHQFPSSCETGPGSPSGHC) the chain is on the lumenal side. Substrate is bound at residue R79. The active-site Proton donor is the H114. The chain crosses the membrane as a helical span at residues 116–135 (MITGAALWPVMIAISSQVAS). Residues 136-140 (QTRSP) lie on the Cytoplasmic side of the membrane. A helical transmembrane segment spans residues 141-162 (WVRVIPGLAYCTFLLAVGLSRV). Residue R161 participates in substrate binding. The Lumenal portion of the chain corresponds to 163–167 (FLLAH). H167 functions as the Nucleophile in the catalytic mechanism. Residues 168–186 (FPHQVLAGLLAGVILGWLL) traverse the membrane as a helical segment. Residues 187–197 (SPRVPMERELS) lie on the Cytoplasmic side of the membrane. Residues 198 to 218 (FYGLTALTLMLGASLMYWTLF) form a helical membrane-spanning segment. At 219-254 (TLGLDLSWSINLASKWCDRPEWVLVDSRPFASLSRD) the chain is on the lumenal side. A helical transmembrane segment spans residues 255-273 (SGSALGLGIALHTPCYAQI). At 274–283 (RRVHLGNGQK) the chain is on the cytoplasmic side. The helical transmembrane segment at 284–304 (IACFVLAMGLLVFLEWLGHPP) threads the bilayer. Over 305–307 (QIS) the chain is Lumenal. Residues 308-328 (LFYIFNFLKFTLWPCLVVALV) traverse the membrane as a helical segment. The Cytoplasmic segment spans residues 329 to 346 (PWMVHTLSAQEAPPIRSS).

It belongs to the glucose-6-phosphatase family. As to expression, expressed in liver and kidney. It is the major glucose-6-phosphatase expressed in the small intestine.

The protein resides in the endoplasmic reticulum membrane. It catalyses the reaction D-glucose 6-phosphate + H2O = D-glucose + phosphate. Its pathway is carbohydrate biosynthesis; gluconeogenesis. With respect to regulation, inhibited by vanadate. Functionally, hydrolyzes glucose-6-phosphate to glucose in the endoplasmic reticulum. May form with the glucose-6-phosphate transporter (SLC37A4/G6PT) a ubiquitously expressed complex responsible for glucose production through glycogenolysis and gluconeogenesis. Probably required for normal neutrophil function. The sequence is that of Glucose-6-phosphatase 3 (G6pc3) from Rattus norvegicus (Rat).